Consider the following 68-residue polypeptide: Large ribosomal subunit protein uL29 (68 aa).

This sequence belongs to the universal ribosomal protein uL29 family.

This chain is Large ribosomal subunit protein uL29, found in Rhodopseudomonas palustris (strain BisB18).